Reading from the N-terminus, the 256-residue chain is Ribosomal RNA small subunit methyltransferase J (256 aa).

S-adenosyl-L-methionine contacts are provided by residues 104-105 (RD), 120-121 (ER), 156-157 (SS), and Asp-174.

It belongs to the methyltransferase superfamily. RsmJ family.

It is found in the cytoplasm. It carries out the reaction guanosine(1516) in 16S rRNA + S-adenosyl-L-methionine = N(2)-methylguanosine(1516) in 16S rRNA + S-adenosyl-L-homocysteine + H(+). In terms of biological role, specifically methylates the guanosine in position 1516 of 16S rRNA. The chain is Ribosomal RNA small subunit methyltransferase J from Yersinia pseudotuberculosis serotype O:3 (strain YPIII).